Reading from the N-terminus, the 149-residue chain is 3-dehydroquinate dehydratase (149 aa).

Tyr26 acts as the Proton acceptor in catalysis. Substrate is bound by residues Asn77, His83, and Asp90. Residue His103 is the Proton donor of the active site. Residues 104–105 and Arg114 contribute to the substrate site; that span reads LS.

Belongs to the type-II 3-dehydroquinase family. Homododecamer.

It catalyses the reaction 3-dehydroquinate = 3-dehydroshikimate + H2O. The protein operates within metabolic intermediate biosynthesis; chorismate biosynthesis; chorismate from D-erythrose 4-phosphate and phosphoenolpyruvate: step 3/7. Its function is as follows. Catalyzes a trans-dehydration via an enolate intermediate. The polypeptide is 3-dehydroquinate dehydratase (Haemophilus influenzae (strain PittEE)).